The sequence spans 525 residues: Cytochrome P450 CYP72A613 (525 aa).

The helical transmembrane segment at 2 to 22 threads the bilayer; sequence VFLFPTGTIIIWVLTILLAVI. Position 473 (Cys-473) interacts with heme.

This sequence belongs to the cytochrome P450 family. Mainly expressed in leaves and seed pods and, to a lower extent, in flowers and stems.

The protein localises to the membrane. Its pathway is steroid metabolism; cholesterol metabolism. Its function is as follows. Involved in the biosynthesis of spiroketal steroid and saponin natural products from cholesterol such as diosgenin and analogs (e.g. furostanol and spirostanol), plant defense compounds used as main precursors for the industrial production of steroid hormones. During the 5,6-spiroketalization of cholesterol, may catalyze the 27-monohydroxylation of furostanol-type steroid to an intermediate product that undergoes a stereospecific formation of the terminal heterocycle to yield diosgenin. The protein is Cytochrome P450 CYP72A613 of Trigonella foenum-graecum (Fenugreek).